A 191-amino-acid polypeptide reads, in one-letter code: Inosine triphosphate pyrophosphatase (191 aa).

Residue 15–20 (TGNANK) coordinates ITP. A Mg(2+)-binding site is contributed by E43. ITP is bound by residues K55, 71-72 (DT), K88, 147-150 (FGWD), K168, and 173-174 (HR).

It belongs to the HAM1 NTPase family. In terms of assembly, homodimer. It depends on Mg(2+) as a cofactor. Requires Mn(2+) as cofactor.

Its subcellular location is the cytoplasm. It localises to the nucleus. It carries out the reaction ITP + H2O = IMP + diphosphate + H(+). The enzyme catalyses dITP + H2O = dIMP + diphosphate + H(+). It catalyses the reaction XTP + H2O = XMP + diphosphate + H(+). In terms of biological role, pyrophosphatase that hydrolyzes non-canonical purine nucleotides such as inosine triphosphate (ITP), deoxyinosine triphosphate (dITP) or xanthosine 5'-triphosphate (XTP) to their respective monophosphate derivatives. The enzyme does not distinguish between the deoxy- and ribose forms. Probably excludes non-canonical purines from RNA and DNA precursor pools, thus preventing their incorporation into RNA and DNA and avoiding chromosomal lesions. The chain is Inosine triphosphate pyrophosphatase from Neurospora crassa (strain ATCC 24698 / 74-OR23-1A / CBS 708.71 / DSM 1257 / FGSC 987).